Here is a 288-residue protein sequence, read N- to C-terminus: Purine nucleoside phosphorylase (288 aa).

65–66 (RN) contributes to the phosphate binding site. Met-201 contributes to the substrate binding site. Residue Thr-202 participates in phosphate binding.

This sequence belongs to the PNP/MTAP phosphorylase family. MTAP subfamily. Homotrimer.

It localises to the cytoplasm. It is found in the nucleus. It catalyses the reaction a purine D-ribonucleoside + phosphate = a purine nucleobase + alpha-D-ribose 1-phosphate. The protein operates within purine metabolism; purine nucleoside salvage. Functionally, purine nucleoside phosphorylase involved in purine salvage. This chain is Purine nucleoside phosphorylase, found in Drosophila pseudoobscura pseudoobscura (Fruit fly).